Here is a 61-residue protein sequence, read N- to C-terminus: Large ribosomal subunit protein bL32 (61 aa).

The interval 1–22 is disordered; it reads MAVPKQKSSKSRGRKRRTHQKV. Positions 7 to 20 are enriched in basic residues; it reads KSSKSRGRKRRTHQ.

Belongs to the bacterial ribosomal protein bL32 family.

This is Large ribosomal subunit protein bL32 from Desulforapulum autotrophicum (strain ATCC 43914 / DSM 3382 / VKM B-1955 / HRM2) (Desulfobacterium autotrophicum).